Consider the following 238-residue polypeptide: Small heat shock protein, chloroplastic (238 aa).

The tract at residues 31-87 (APLSTGGRTRPLSVASAAQENRDNSVDVQVSQAQNAGNQQGNAVQRRPRRAGFDISP) is disordered. The span at 58 to 75 (VQVSQAQNAGNQQGNAVQ) shows a compositional bias: low complexity. Residues 124 to 238 (AARARRRMPW…ERKVIDVQVQ (115 aa)) enclose the sHSP domain.

This sequence belongs to the small heat shock protein (HSP20) family.

The protein resides in the plastid. It localises to the chloroplast. This chain is Small heat shock protein, chloroplastic (HSP21), found in Triticum aestivum (Wheat).